The primary structure comprises 55 residues: Large ribosomal subunit protein bL33 (55 aa).

This sequence belongs to the bacterial ribosomal protein bL33 family.

The polypeptide is Large ribosomal subunit protein bL33 (Bradyrhizobium diazoefficiens (strain JCM 10833 / BCRC 13528 / IAM 13628 / NBRC 14792 / USDA 110)).